The chain runs to 698 residues: Polyribonucleotide nucleotidyltransferase (698 aa).

The Mg(2+) site is built by Asp485 and Asp491. The region spanning 552 to 611 (PRITTIKINPEKIRDVIGKGGAVIRALTEETGTTIELDDNGTVKIASSNGEATKEAIRRI) is the KH domain. Positions 621–689 (GRIYNGKVIR…RQGRVRLSIK (69 aa)) constitute an S1 motif domain.

The protein belongs to the polyribonucleotide nucleotidyltransferase family. In terms of assembly, component of the RNA degradosome, which is a multiprotein complex involved in RNA processing and mRNA degradation. Requires Mg(2+) as cofactor.

It localises to the cytoplasm. The catalysed reaction is RNA(n+1) + phosphate = RNA(n) + a ribonucleoside 5'-diphosphate. In terms of biological role, involved in mRNA degradation. Catalyzes the phosphorolysis of single-stranded polyribonucleotides processively in the 3'- to 5'-direction. The sequence is that of Polyribonucleotide nucleotidyltransferase from Shewanella frigidimarina (strain NCIMB 400).